The chain runs to 212 residues: Thymidylate kinase (212 aa).

Gly-10–Thr-17 lines the ATP pocket.

This sequence belongs to the thymidylate kinase family.

The catalysed reaction is dTMP + ATP = dTDP + ADP. Its function is as follows. Phosphorylation of dTMP to form dTDP in both de novo and salvage pathways of dTTP synthesis. This is Thymidylate kinase from Bacillus licheniformis (strain ATCC 14580 / DSM 13 / JCM 2505 / CCUG 7422 / NBRC 12200 / NCIMB 9375 / NCTC 10341 / NRRL NRS-1264 / Gibson 46).